The primary structure comprises 932 residues: 2-oxoglutarate dehydrogenase E1 component (932 aa).

The protein belongs to the alpha-ketoglutarate dehydrogenase family. In terms of assembly, homodimer. Part of the 2-oxoglutarate dehydrogenase (OGDH) complex composed of E1 (2-oxoglutarate dehydrogenase), E2 (dihydrolipoamide succinyltransferase) and E3 (dihydrolipoamide dehydrogenase); the complex contains multiple copies of the three enzymatic components (E1, E2 and E3). Requires thiamine diphosphate as cofactor.

The enzyme catalyses N(6)-[(R)-lipoyl]-L-lysyl-[protein] + 2-oxoglutarate + H(+) = N(6)-[(R)-S(8)-succinyldihydrolipoyl]-L-lysyl-[protein] + CO2. In terms of biological role, E1 component of the 2-oxoglutarate dehydrogenase (OGDH) complex which catalyzes the decarboxylation of 2-oxoglutarate, the first step in the conversion of 2-oxoglutarate to succinyl-CoA and CO(2). The chain is 2-oxoglutarate dehydrogenase E1 component from Staphylococcus aureus (strain MRSA252).